A 421-amino-acid chain; its full sequence is D-amino acid dehydrogenase (421 aa).

3–17 (VIVLGSGVIGVASAY) is a binding site for FAD.

This sequence belongs to the DadA oxidoreductase family. The cofactor is FAD.

It carries out the reaction a D-alpha-amino acid + A + H2O = a 2-oxocarboxylate + AH2 + NH4(+). The protein operates within amino-acid degradation; D-alanine degradation; NH(3) and pyruvate from D-alanine: step 1/1. Its function is as follows. Oxidative deamination of D-amino acids. In Acinetobacter baumannii (strain AB307-0294), this protein is D-amino acid dehydrogenase.